Here is a 427-residue protein sequence, read N- to C-terminus: Probable WRKY transcription factor 35 (427 aa).

2 disordered regions span residues 1–45 and 266–336; these read MDNF…DLHV and YTSE…HPPF. The span at 23-40 shows a compositional bias: pro residues; the sequence is SPGPPEGPSPSSMSPPPT. The segment at residues 209–275 is a DNA-binding region (WRKY); sequence SGEVVPSDLW…YTSEHNHPWP (67 aa). Low complexity predominate over residues 284–310; it reads STRSSSSSSLNPSSKSSTAAATTSPSS. Residues 311–333 are compositionally biased toward polar residues; the sequence is RVFQNNSSKDEPNNSNLPSSSTH.

Belongs to the WRKY group II-e family.

The protein localises to the nucleus. In terms of biological role, transcription factor. Interacts specifically with the W box (5'-(T)TGAC[CT]-3'), a frequently occurring elicitor-responsive cis-acting element. The chain is Probable WRKY transcription factor 35 (WRKY35) from Arabidopsis thaliana (Mouse-ear cress).